Consider the following 221-residue polypeptide: Probable septum site-determining protein MinC (221 aa).

The protein belongs to the MinC family. In terms of assembly, interacts with MinD and FtsZ.

In terms of biological role, cell division inhibitor that blocks the formation of polar Z ring septums. Rapidly oscillates between the poles of the cell to destabilize FtsZ filaments that have formed before they mature into polar Z rings. Prevents FtsZ polymerization. This is Probable septum site-determining protein MinC from Shewanella woodyi (strain ATCC 51908 / MS32).